The sequence spans 190 residues: Cathelicidin-3 (190 aa).

The signal sequence occupies residues Met-1 to Ala-29. A Pyrrolidone carboxylic acid modification is found at Gln-30. Residues Gln-30–Val-130 constitute a propeptide that is removed on maturation. Disulfide bonds link Cys-85-Cys-96 and Cys-107-Cys-124. Positions Leu-133–Pro-151 are enriched in basic residues. The tract at residues Leu-133–Leu-190 is disordered. Residues Trp-172–Leu-190 are compositionally biased toward pro residues.

Belongs to the cathelicidin family.

The protein localises to the secreted. In terms of biological role, exerts, in vitro, a potent antimicrobial activity. Probably due to an impairment of the function of the respiratory chain and of energy-dependent activities in the inner membrane of susceptible microorganisms. The chain is Cathelicidin-3 (CATHL3) from Ovis aries (Sheep).